Here is a 617-residue protein sequence, read N- to C-terminus: Formin-binding protein 1 (617 aa).

Residues 1–79 form a required for self-association and induction of membrane tubulation region; the sequence is MSWGTELWDQ…CKAFISNLNE (79 aa). Positions 1 to 264 constitute an F-BAR domain; that stretch reads MSWGTELWDQ…AAESIDQKND (264 aa). Residues 1-335 are interaction with microtubules; sequence MSWGTELWDQ…KKNKLMSLLT (335 aa). N6-acetyllysine occurs at positions 66 and 110. Residues 67–259 are a coiled coil; the sequence is YTSCKAFISN…DGIVKAAESI (193 aa). The tract at residues 251–617 is required for self-association and induction of membrane tubulation; it reads GIVKAAESID…VCLDKNAKDS (367 aa). Disordered regions lie at residues 280 to 315 and 333 to 366; these read GDIEFEDYTQPMKRTVSDNSLSNSRGEGKPDLKFGG and LLTSPHQPPPPPPASASPSAVPNGPQSPKQQKEP. A phosphoserine mark is found at Ser296 and Ser299. Over residues 338–347 the composition is skewed to pro residues; that stretch reads HQPPPPPPAS. Phosphoserine occurs at positions 349 and 359. Positions 398–490 form a coiled coil; it reads TPEDFSNLPP…EVEGRLPARS (93 aa). The segment at 400 to 552 is interaction with RND2; it reads EDFSNLPPEQ…FDDEEPLPAI (153 aa). An REM-1 domain is found at 404 to 481; it reads NLPPEQRRKK…TQKFEAWLAE (78 aa). Residues 486 to 531 form a disordered region; that stretch reads LPARSEQARRQSGLYDSQNPPTVNNCAQDRESPDGSYTEEQSQESE. Residues 495 to 617 form an interaction with PDE6G region; it reads RQSGLYDSQN…VCLDKNAKDS (123 aa). Phosphoserine is present on Ser497. The span at 499 to 512 shows a compositional bias: polar residues; it reads LYDSQNPPTVNNCA. The residue at position 500 (Tyr500) is a Phosphotyrosine. The required for interaction with TNKS stretch occupies residues 514–617; the sequence is DRESPDGSYT…VCLDKNAKDS (104 aa). At Ser521 the chain carries Phosphoserine. The interaction with DNM1 and DNM3 stretch occupies residues 535–617; that stretch reads LATDFDDEFD…VCLDKNAKDS (83 aa). One can recognise an SH3 domain in the interval 550 to 611; that stretch reads PAIGTCKALY…PTSYVEVCLD (62 aa). Residues 550-617 are interaction with ARHGAP17, DAAM1, DIAPH1 and DIAPH2; that stretch reads PAIGTCKALY…VCLDKNAKDS (68 aa). The interval 553–609 is interaction with DNM2 and WASL; sequence GTCKALYTFEGQNEGTISVVEGETLYVIEEDKGDGWTRIRRNEDEEGYVPTSYVEVC. The interaction with FASLG stretch occupies residues 553–610; it reads GTCKALYTFEGQNEGTISVVEGETLYVIEEDKGDGWTRIRRNEDEEGYVPTSYVEVCL.

This sequence belongs to the FNBP1 family. Interacts specifically with GTP-bound RND2 and CDC42. Interacts with PDE6G and microtubules. Homodimerizes, the dimers can polymerize end-to-end to form filamentous structures. Interacts with AKAP9, ARHGAP17, DAAM1, DIAPH1, DIAPH2, DNM1, DNM2, DNM3, FASLG/FASL, SNX2 and WASL/N-WASP. May interact with TNKS. In terms of tissue distribution, very highly expressed in the epithelial cells of the gastrointestinal tract, respiratory, reproductive and urinary systems. Also highly expressed in brown adipose tissue, cardiomyocytes, enteric ganglia and glucagon producing cells of the pancreas. Expressed in germ cells of the testis and all regions of the brain.

The protein localises to the cytoplasm. Its subcellular location is the cytoskeleton. The protein resides in the cell cortex. It is found in the lysosome. It localises to the cytoplasmic vesicle. The protein localises to the cell membrane. Its subcellular location is the membrane. The protein resides in the clathrin-coated pit. Its function is as follows. May act as a link between RND2 signaling and regulation of the actin cytoskeleton. Required to coordinate membrane tubulation with reorganization of the actin cytoskeleton during the late stage of clathrin-mediated endocytosis. Binds to lipids such as phosphatidylinositol 4,5-bisphosphate and phosphatidylserine and promotes membrane invagination and the formation of tubules. Also enhances actin polymerization via the recruitment of WASL/N-WASP, which in turn activates the Arp2/3 complex. Actin polymerization may promote the fission of membrane tubules to form endocytic vesicles. May be required for the lysosomal retention of FASLG/FASL. The sequence is that of Formin-binding protein 1 (FNBP1) from Homo sapiens (Human).